The chain runs to 727 residues: Glucans biosynthesis glucosyltransferase H (727 aa).

A disordered region spans residues 18-41 (SAMPNERPGAMEPQKLSKMPEGFP). 7 helical membrane-spanning segments follow: residues 58–78 (FLVVGGALLLSLFAIYEMGAV), 97–117 (VNFCWIALAFCSGIAGFLILL), 278–298 (LQQFAARIYGPVIGTGLGWWV), 408–428 (IMAYLSSPFWLMLILTGLMLA), 460–480 (LFYITMGVLFGPKVFGVLLLL), 496–516 (IFSVIFEVILSALIAPIMMFI), and 572–592 (LLAWMSPALIGLWIAVPISAW).

The protein belongs to the glycosyltransferase 2 family. OpgH subfamily.

It localises to the cell inner membrane. It functions in the pathway glycan metabolism; osmoregulated periplasmic glucan (OPG) biosynthesis. Functionally, involved in the biosynthesis of osmoregulated periplasmic glucans (OPGs). This is Glucans biosynthesis glucosyltransferase H from Shewanella baltica (strain OS155 / ATCC BAA-1091).